A 581-amino-acid chain; its full sequence is DNA primase (581 aa).

Residues 40–64 form a CHC2-type zinc finger; sequence CPFHNEKTPSFTVNGEKQFYHCFGC. In terms of domain architecture, Toprim spans 259–341; it reads NRLLVVEGYM…GRQLRFMFLP (83 aa). Positions 265, 309, and 311 each coordinate Mg(2+).

Belongs to the DnaG primase family. Monomer. Interacts with DnaB. Zn(2+) is required as a cofactor. It depends on Mg(2+) as a cofactor.

The enzyme catalyses ssDNA + n NTP = ssDNA/pppN(pN)n-1 hybrid + (n-1) diphosphate.. RNA polymerase that catalyzes the synthesis of short RNA molecules used as primers for DNA polymerase during DNA replication. This Shigella flexneri protein is DNA primase.